We begin with the raw amino-acid sequence, 347 residues long: NADH-quinone oxidoreductase subunit H (347 aa).

Transmembrane regions (helical) follow at residues 13–33, 50–70, 82–102, 115–135, 161–181, 198–218, 263–283, 286–306, and 321–341; these read IIMIGQSLLLLVCLLVFIAYV, PNVVGPFGLFQSFADLLKFVF, AVFLLAPLVTVLLALSTWAVV, VGILYIFAISSLEVYGIIMGG, IGFVIVTVLLCVGSLNLTDIV, FLDWHWLSLFPMFIIFFISAL, CSLTTILFLGGWLPPVDIWIL, VPGIIWFMLKACFVFFMFAMV, and LGWKVFLPLSLAMVIIVAFVL.

Belongs to the complex I subunit 1 family. In terms of assembly, NDH-1 is composed of 14 different subunits. Subunits NuoA, H, J, K, L, M, N constitute the membrane sector of the complex.

It localises to the cell inner membrane. It carries out the reaction a quinone + NADH + 5 H(+)(in) = a quinol + NAD(+) + 4 H(+)(out). Its function is as follows. NDH-1 shuttles electrons from NADH, via FMN and iron-sulfur (Fe-S) centers, to quinones in the respiratory chain. The immediate electron acceptor for the enzyme in this species is believed to be ubiquinone. Couples the redox reaction to proton translocation (for every two electrons transferred, four hydrogen ions are translocated across the cytoplasmic membrane), and thus conserves the redox energy in a proton gradient. This subunit may bind ubiquinone. This Rhizobium leguminosarum bv. trifolii (strain WSM2304) protein is NADH-quinone oxidoreductase subunit H.